Consider the following 293-residue polypeptide: ATP phosphoribosyltransferase (293 aa).

Belongs to the ATP phosphoribosyltransferase family. Long subfamily. Mg(2+) serves as cofactor.

The protein resides in the cytoplasm. The catalysed reaction is 1-(5-phospho-beta-D-ribosyl)-ATP + diphosphate = 5-phospho-alpha-D-ribose 1-diphosphate + ATP. The protein operates within amino-acid biosynthesis; L-histidine biosynthesis; L-histidine from 5-phospho-alpha-D-ribose 1-diphosphate: step 1/9. Feedback inhibited by histidine. In terms of biological role, catalyzes the condensation of ATP and 5-phosphoribose 1-diphosphate to form N'-(5'-phosphoribosyl)-ATP (PR-ATP). Has a crucial role in the pathway because the rate of histidine biosynthesis seems to be controlled primarily by regulation of HisG enzymatic activity. The protein is ATP phosphoribosyltransferase of Nitratidesulfovibrio vulgaris (strain ATCC 29579 / DSM 644 / CCUG 34227 / NCIMB 8303 / VKM B-1760 / Hildenborough) (Desulfovibrio vulgaris).